Here is a 261-residue protein sequence, read N- to C-terminus: uncharacterized protein (261 aa).

A signal peptide spans methionine 1 to glycine 22. Cysteine 23 carries the N-palmitoyl cysteine lipid modification. A lipid anchor (S-diacylglycerol cysteine) is attached at cysteine 23.

It belongs to the staphylococcal tandem lipoprotein family.

The protein localises to the cell membrane. This is an uncharacterized protein from Staphylococcus aureus (strain NCTC 8325 / PS 47).